The sequence spans 411 residues: Dual-specificity RNA methyltransferase RlmN (411 aa).

Glutamate 124 functions as the Proton acceptor in the catalytic mechanism. The Radical SAM core domain maps to 130-379 (EEGRGTLCIS…IRTPRGRDIL (250 aa)). Cysteine 137 and cysteine 382 are oxidised to a cystine. Cysteine 144, cysteine 148, and cysteine 151 together coordinate [4Fe-4S] cluster. S-adenosyl-L-methionine contacts are provided by residues 208–209 (GE), serine 240, 262–264 (SLH), and asparagine 339. Cysteine 382 functions as the S-methylcysteine intermediate in the catalytic mechanism.

The protein belongs to the radical SAM superfamily. RlmN family. [4Fe-4S] cluster is required as a cofactor.

It is found in the cytoplasm. It carries out the reaction adenosine(2503) in 23S rRNA + 2 reduced [2Fe-2S]-[ferredoxin] + 2 S-adenosyl-L-methionine = 2-methyladenosine(2503) in 23S rRNA + 5'-deoxyadenosine + L-methionine + 2 oxidized [2Fe-2S]-[ferredoxin] + S-adenosyl-L-homocysteine. It catalyses the reaction adenosine(37) in tRNA + 2 reduced [2Fe-2S]-[ferredoxin] + 2 S-adenosyl-L-methionine = 2-methyladenosine(37) in tRNA + 5'-deoxyadenosine + L-methionine + 2 oxidized [2Fe-2S]-[ferredoxin] + S-adenosyl-L-homocysteine. In terms of biological role, specifically methylates position 2 of adenine 2503 in 23S rRNA and position 2 of adenine 37 in tRNAs. m2A2503 modification seems to play a crucial role in the proofreading step occurring at the peptidyl transferase center and thus would serve to optimize ribosomal fidelity. The sequence is that of Dual-specificity RNA methyltransferase RlmN from Sinorhizobium fredii (strain NBRC 101917 / NGR234).